The primary structure comprises 117 residues: Large ribosomal subunit protein bL20 (117 aa).

Belongs to the bacterial ribosomal protein bL20 family.

Functionally, binds directly to 23S ribosomal RNA and is necessary for the in vitro assembly process of the 50S ribosomal subunit. It is not involved in the protein synthesizing functions of that subunit. The protein is Large ribosomal subunit protein bL20 of Rippkaea orientalis (strain PCC 8801 / RF-1) (Cyanothece sp. (strain PCC 8801)).